A 336-amino-acid polypeptide reads, in one-letter code: C4-dicarboxylate-binding periplasmic protein DctP (336 aa).

A signal peptide spans 1-31 (MTRLNTCTFIKQIVKMTSIAALLGASLNSWA). Lys48, Lys101, Arg176, Asn216, Asn220, and Tyr243 together coordinate (S)-malate. Succinate is bound by residues Lys48, Lys101, Arg176, Asn216, Asn220, and Tyr243.

Belongs to the bacterial solute-binding protein 7 family. The complex comprises the extracytoplasmic solute receptor protein DctP, and the two transmembrane proteins DctQ and DctM.

It localises to the periplasm. In terms of biological role, part of the tripartite ATP-independent periplasmic (TRAP) transport system DctPQM involved in C4-dicarboxylates uptake. Required for the utilization of succinate, fumarate, L-malate and alpha-ketoglutarate. Binds succinate and malate. In Shewanella loihica (strain ATCC BAA-1088 / PV-4), this protein is C4-dicarboxylate-binding periplasmic protein DctP.